The following is a 193-amino-acid chain: Peptidyl-tRNA hydrolase (193 aa).

TRNA is bound at residue Tyr-15. His-20 acts as the Proton acceptor in catalysis. Phe-65, Asn-67, and Asn-113 together coordinate tRNA.

Belongs to the PTH family. In terms of assembly, monomer.

The protein resides in the cytoplasm. It carries out the reaction an N-acyl-L-alpha-aminoacyl-tRNA + H2O = an N-acyl-L-amino acid + a tRNA + H(+). Functionally, hydrolyzes ribosome-free peptidyl-tRNAs (with 1 or more amino acids incorporated), which drop off the ribosome during protein synthesis, or as a result of ribosome stalling. Catalyzes the release of premature peptidyl moieties from peptidyl-tRNA molecules trapped in stalled 50S ribosomal subunits, and thus maintains levels of free tRNAs and 50S ribosomes. The protein is Peptidyl-tRNA hydrolase of Ehrlichia ruminantium (strain Welgevonden).